Consider the following 144-residue polypeptide: Peptide methionine sulfoxide reductase B7 (144 aa).

One can recognise a MsrB domain in the interval 19 to 140 (DEEWRAVLSP…NSVSLKFSSA (122 aa)). The Zn(2+) site is built by Cys-58, Cys-61, Cys-104, and Cys-107. Cysteines 76 and 129 form a disulfide. The active-site Nucleophile is Cys-129.

This sequence belongs to the MsrB Met sulfoxide reductase family. Zn(2+) is required as a cofactor.

The protein localises to the cytoplasm. It localises to the cytosol. It carries out the reaction L-methionyl-[protein] + [thioredoxin]-disulfide + H2O = L-methionyl-(R)-S-oxide-[protein] + [thioredoxin]-dithiol. Functionally, catalyzes the reduction of methionine sulfoxide (MetSO) to methionine in proteins. Plays a protective role against oxidative stress by restoring activity to proteins that have been inactivated by methionine oxidation. MSRB family specifically reduces the MetSO R-enantiomer. The polypeptide is Peptide methionine sulfoxide reductase B7 (MSRB7) (Arabidopsis thaliana (Mouse-ear cress)).